Reading from the N-terminus, the 375-residue chain is Coproporphyrin III ferrochelatase (375 aa).

Residues S59 and Y128 each contribute to the Fe-coproporphyrin III site. Fe(2+) is bound by residues H191 and E286.

The protein belongs to the ferrochelatase family.

It is found in the cytoplasm. It carries out the reaction Fe-coproporphyrin III + 2 H(+) = coproporphyrin III + Fe(2+). It functions in the pathway porphyrin-containing compound metabolism; protoheme biosynthesis. Functionally, involved in coproporphyrin-dependent heme b biosynthesis. Catalyzes the insertion of ferrous iron into coproporphyrin III to form Fe-coproporphyrin III. The sequence is that of Coproporphyrin III ferrochelatase from Streptomyces griseus subsp. griseus (strain JCM 4626 / CBS 651.72 / NBRC 13350 / KCC S-0626 / ISP 5235).